Here is a 570-residue protein sequence, read N- to C-terminus: RNA polymerase I termination factor (570 aa).

Positions 1–16 (MDSVSNLKSTNFQNNN) are enriched in polar residues. Disordered stretches follow at residues 1–21 (MDSVSNLKSTNFQNNNDPKES), 37–68 (HIKKTKKKLKKQKKRKHGSKMSHEDEDTDMDW), and 100–138 (SSMREKDKRSCHKKSSNSRSERKKHRKRKSSKERKAKIK). A compositionally biased stretch (basic residues) spans 37–56 (HIKKTKKKLKKQKKRKHGSK). Position 64 is a phosphothreonine (T64). Residues 108–137 (RSCHKKSSNSRSERKKHRKRKSSKERKAKI) show a composition bias toward basic residues. In terms of domain architecture, Myb-like 1 spans 273 to 339 (KFTPSEENAL…SIYKHIRRKY (67 aa)). Residues 340 to 391 (HIFEQRGKWTPEEDQELARLCLEKEGHWTEVGKLLGRMPEDCRDRWRNYMKC) enclose the HTH myb-type domain. The H-T-H motif DNA-binding region spans 367 to 389 (WTEVGKLLGRMPEDCRDRWRNYM). 2 consecutive Myb-like domains span residues 392 to 486 (GSKR…NKLV) and 493 to 549 (SMLS…MREK).

In terms of assembly, interacts with FOB1. Interacts with the RENT complex subunits NET1 and SIR2.

It is found in the nucleus. Its subcellular location is the nucleolus. Its function is as follows. DNA-binding protein that recognizes sequence-specific replication termini (Ter sites) within rDNA. Binds to rDNA terminator elements and mediates efficient RNA polymerase I transcription termination. Required for rDNA silencing at the non-transcribed spacer 1 (NTS1). Promotes the association of SIR2 with NTS1 and contributes to maintenance of rDNA stability. The chain is RNA polymerase I termination factor from Saccharomyces cerevisiae (strain ATCC 204508 / S288c) (Baker's yeast).